The chain runs to 469 residues: Glutamate--tRNA ligase (469 aa).

A 'HIGH' region motif is present at residues 11–21 (PSPTGFIHLGN). A 'KMSKS' region motif is present at residues 243 to 247 (KMSKR). Lys246 is a binding site for ATP.

Belongs to the class-I aminoacyl-tRNA synthetase family. Glutamate--tRNA ligase type 1 subfamily. In terms of assembly, monomer.

It localises to the cytoplasm. The catalysed reaction is tRNA(Glu) + L-glutamate + ATP = L-glutamyl-tRNA(Glu) + AMP + diphosphate. Functionally, catalyzes the attachment of glutamate to tRNA(Glu) in a two-step reaction: glutamate is first activated by ATP to form Glu-AMP and then transferred to the acceptor end of tRNA(Glu). The protein is Glutamate--tRNA ligase of Burkholderia lata (strain ATCC 17760 / DSM 23089 / LMG 22485 / NCIMB 9086 / R18194 / 383).